The sequence spans 218 residues: ETS domain-containing protein ets-7 (218 aa).

Positions 12 to 93 form a DNA-binding region, ETS; sequence QRLLNFLRGL…KGKDSRYCFL (82 aa). The span at 131 to 161 shows a compositional bias: low complexity; that stretch reads TSNFSLQSSPSSSSNSSSARTMSATSSPTSS. Positions 131–162 are disordered; it reads TSNFSLQSSPSSSSNSSSARTMSATSSPTSSL.

The protein belongs to the ETS family.

The protein localises to the nucleus. In terms of biological role, probable transcription factor. Involved in responses to oxidative stress. The sequence is that of ETS domain-containing protein ets-7 from Caenorhabditis elegans.